Reading from the N-terminus, the 75-residue chain is Small ribosomal subunit protein bS16 (75 aa).

Belongs to the bacterial ribosomal protein bS16 family.

In Campylobacter lari (strain RM2100 / D67 / ATCC BAA-1060), this protein is Small ribosomal subunit protein bS16.